A 188-amino-acid chain; its full sequence is Mitochondrial import receptor subunit TOM20-1 (188 aa).

The Cytoplasmic portion of the chain corresponds to 1-164 (MDKLNFFEEI…VVKNKKSSDE (164 aa)). A helical membrane pass occupies residues 165-182 (KYIVMGWVILAIGVVACI). At 183 to 188 (SFRKLR) the chain is on the mitochondrial intermembrane side.

Belongs to the Tom20 family. In terms of assembly, forms part of the preprotein translocase complex of the outer mitochondrial membrane (TOM complex) which consists of at least 6 different proteins (TOM5, TOM6, TOM7, TOM20, TOM22/TOM9 and TOM40). Component of a mitochondrial large protein complex that contains, at least, MIC60, DGS1, TOM40, TOM20 proteins, and petC/RISP. As to expression, barely detected in roots.

It is found in the mitochondrion outer membrane. Central component of the receptor complex responsible for the recognition and translocation of cytosolically synthesized mitochondrial preproteins. Together with TOM22 functions as the transit peptide receptor at the surface of the mitochondrion outer membrane and facilitates the movement of preproteins into the translocation pore. This is Mitochondrial import receptor subunit TOM20-1 from Arabidopsis thaliana (Mouse-ear cress).